Here is a 431-residue protein sequence, read N- to C-terminus: Light-independent protochlorophyllide reductase subunit N (431 aa).

3 residues coordinate [4Fe-4S] cluster: Cys-29, Cys-54, and Cys-114.

The protein belongs to the BchN/ChlN family. As to quaternary structure, protochlorophyllide reductase is composed of three subunits; ChlL, ChlN and ChlB. Forms a heterotetramer of two ChlB and two ChlN subunits. The cofactor is [4Fe-4S] cluster.

The protein localises to the plastid. The protein resides in the chloroplast. It carries out the reaction chlorophyllide a + oxidized 2[4Fe-4S]-[ferredoxin] + 2 ADP + 2 phosphate = protochlorophyllide a + reduced 2[4Fe-4S]-[ferredoxin] + 2 ATP + 2 H2O. It functions in the pathway porphyrin-containing compound metabolism; chlorophyll biosynthesis (light-independent). Its function is as follows. Component of the dark-operative protochlorophyllide reductase (DPOR) that uses Mg-ATP and reduced ferredoxin to reduce ring D of protochlorophyllide (Pchlide) to form chlorophyllide a (Chlide). This reaction is light-independent. The NB-protein (ChlN-ChlB) is the catalytic component of the complex. This chain is Light-independent protochlorophyllide reductase subunit N, found in Nephroselmis olivacea (Green alga).